The primary structure comprises 450 residues: tRNA modification GTPase MnmE (450 aa).

Arg25, Glu83, and Lys122 together coordinate (6S)-5-formyl-5,6,7,8-tetrahydrofolate. One can recognise a TrmE-type G domain in the interval 218–377 (GFKVAIIGKP…QMEALLDSIG (160 aa)). Asn228 contributes to the K(+) binding site. GTP is bound by residues 228–233 (NVGKSS), 247–253 (SDIAGTT), and 272–275 (DTAG). Ser232 is a binding site for Mg(2+). Residues Ser247, Ile249, and Thr252 each contribute to the K(+) site. Residue Thr253 participates in Mg(2+) binding. Lys450 contributes to the (6S)-5-formyl-5,6,7,8-tetrahydrofolate binding site.

Belongs to the TRAFAC class TrmE-Era-EngA-EngB-Septin-like GTPase superfamily. TrmE GTPase family. Homodimer. Heterotetramer of two MnmE and two MnmG subunits. Requires K(+) as cofactor.

It is found in the cytoplasm. Exhibits a very high intrinsic GTPase hydrolysis rate. Involved in the addition of a carboxymethylaminomethyl (cmnm) group at the wobble position (U34) of certain tRNAs, forming tRNA-cmnm(5)s(2)U34. The chain is tRNA modification GTPase MnmE from Sulfurovum sp. (strain NBC37-1).